Consider the following 530-residue polypeptide: Glutamate--cysteine ligase (530 aa).

Belongs to the glutamate--cysteine ligase type 1 family. Type 1 subfamily.

It carries out the reaction L-cysteine + L-glutamate + ATP = gamma-L-glutamyl-L-cysteine + ADP + phosphate + H(+). It participates in sulfur metabolism; glutathione biosynthesis; glutathione from L-cysteine and L-glutamate: step 1/2. This chain is Glutamate--cysteine ligase, found in Saccharophagus degradans (strain 2-40 / ATCC 43961 / DSM 17024).